A 263-amino-acid polypeptide reads, in one-letter code: Trans-aconitate 2-methyltransferase (263 aa).

This sequence belongs to the methyltransferase superfamily. Tam family.

Its subcellular location is the cytoplasm. The catalysed reaction is trans-aconitate + S-adenosyl-L-methionine = (E)-3-(methoxycarbonyl)pent-2-enedioate + S-adenosyl-L-homocysteine. Its function is as follows. Catalyzes the S-adenosylmethionine monomethyl esterification of trans-aconitate. The protein is Trans-aconitate 2-methyltransferase of Mycobacterium ulcerans (strain Agy99).